A 103-amino-acid polypeptide reads, in one-letter code: Large ribosomal subunit protein uL24 (103 aa).

This sequence belongs to the universal ribosomal protein uL24 family. As to quaternary structure, part of the 50S ribosomal subunit.

In terms of biological role, one of two assembly initiator proteins, it binds directly to the 5'-end of the 23S rRNA, where it nucleates assembly of the 50S subunit. Functionally, one of the proteins that surrounds the polypeptide exit tunnel on the outside of the subunit. This chain is Large ribosomal subunit protein uL24, found in Dehalococcoides mccartyi (strain ATCC BAA-2266 / KCTC 15142 / 195) (Dehalococcoides ethenogenes (strain 195)).